The primary structure comprises 178 residues: Large ribosomal subunit protein uL6 (178 aa).

This sequence belongs to the universal ribosomal protein uL6 family. In terms of assembly, part of the 50S ribosomal subunit.

Its function is as follows. This protein binds to the 23S rRNA, and is important in its secondary structure. It is located near the subunit interface in the base of the L7/L12 stalk, and near the tRNA binding site of the peptidyltransferase center. The polypeptide is Large ribosomal subunit protein uL6 (Streptococcus pneumoniae (strain ATCC 700669 / Spain 23F-1)).